Reading from the N-terminus, the 71-residue chain is Large ribosomal subunit protein uL30 (71 aa).

It belongs to the universal ribosomal protein uL30 family. As to quaternary structure, part of the 50S ribosomal subunit.

In Mycobacterium leprae (strain TN), this protein is Large ribosomal subunit protein uL30.